Consider the following 388-residue polypeptide: Xylose isomerase (388 aa).

Active-site residues include His-54 and Asp-57. Mg(2+) contacts are provided by Glu-181, Glu-217, His-220, Asp-245, Asp-255, Asp-257, and Asp-287.

The protein belongs to the xylose isomerase family. Homotetramer. The cofactor is Mg(2+).

The protein localises to the cytoplasm. The catalysed reaction is alpha-D-xylose = alpha-D-xylulofuranose. The sequence is that of Xylose isomerase from Streptomyces thermocyaneoviolaceus.